The chain runs to 315 residues: Porphobilinogen deaminase (315 aa).

Cysteine 238 is subject to S-(dipyrrolylmethanemethyl)cysteine.

The protein belongs to the HMBS family. As to quaternary structure, monomer. It depends on dipyrromethane as a cofactor.

The enzyme catalyses 4 porphobilinogen + H2O = hydroxymethylbilane + 4 NH4(+). It participates in porphyrin-containing compound metabolism; protoporphyrin-IX biosynthesis; coproporphyrinogen-III from 5-aminolevulinate: step 2/4. Its function is as follows. Tetrapolymerization of the monopyrrole PBG into the hydroxymethylbilane pre-uroporphyrinogen in several discrete steps. This is Porphobilinogen deaminase from Albidiferax ferrireducens (strain ATCC BAA-621 / DSM 15236 / T118) (Rhodoferax ferrireducens).